Here is a 146-residue protein sequence, read N- to C-terminus: Mitochondrial import receptor subunit TOM20 homolog B (146 aa).

Topologically, residues 1-5 are mitochondrial intermembrane; it reads MMGGS. The chain crosses the membrane as a helical span at residues 6–25; it reads SSRIAAGLGAALFVGYCIYF. At 26-146 the chain is on the cytoplasmic side; it reads DRKRRSDPNY…AQSISDDDIE (121 aa). A compositionally biased stretch (basic residues) spans 37–47; it reads NKLRERRKKQK. The tract at residues 37–56 is disordered; it reads NKLRERRKKQKAAQEKAGLS. Residue S141 is modified to Phosphoserine.

The protein belongs to the Tom20 family. As to quaternary structure, forms part of the preprotein translocase complex of the outer mitochondrial membrane (TOM complex). Interacts with tom22.

It is found in the mitochondrion outer membrane. In terms of biological role, central component of the receptor complex responsible for the recognition and translocation of cytosolically synthesized mitochondrial preproteins. Together with tom22 functions as the transit peptide receptor at the surface of the mitochondrion outer membrane and facilitates the movement of preproteins into the tom40 translocation pore. This Danio rerio (Zebrafish) protein is Mitochondrial import receptor subunit TOM20 homolog B (tomm20b).